The sequence spans 299 residues: MSSYMHPLLGQELHLQRPEDSRTPPDQNNMELNRSEADEAKAETTPTGGATSSATASGSSSGRRPRGRPAGSKNKPKPPTIITRDSPNVLRSHVLEVTSGSDISEAVSTYATRRGCGVCIISGTGAVTNVTIRQPAAPAGGGVITLHGRFDILSLTGTALPPPAPPGAGGLTVYLAGGQGQVVGGNVAGSLIASGPVVLMAASFANAVYDRLPIEEEETPPPRTTGVQQQQPEASQSSEVTGSGAQACESNLQGGNGGGGVAFYNLGMNMNNFQFSGGDIYGMSGGSGGGGGGATRPAF.

2 disordered regions span residues 1–87 and 216–251; these read MSSY…RDSP and EEETPPPRTTGVQQQQPEASQSSEVTGSGAQACESN. Composition is skewed to basic and acidic residues over residues 14 to 23 and 33 to 42; these read HLQRPEDSRT and NRSEADEAKA. Low complexity-rich tracts occupy residues 44 to 72 and 224 to 239; these read TTPTGGATSSATASGSSSGRRPRGRPAGS and TTGVQQQQPEASQSSE. A DNA-binding region (a.T hook) is located at residues 63-75; the sequence is RRPRGRPAGSKNK. In terms of domain architecture, PPC spans 87 to 233; sequence PNVLRSHVLE…TTGVQQQQPE (147 aa). Over residues 240 to 251 the composition is skewed to polar residues; it reads VTGSGAQACESN.

Homodimer. Interacts with AHL27 and AHL29. In terms of tissue distribution, expressed in seedlings, leaves, stems, floral tips and flowers.

It localises to the nucleus. In terms of biological role, transcription factor that specifically binds AT-rich DNA sequences related to the nuclear matrix attachment regions (MARs). Binds the DNA sequence GNFEI (GA-negative feedback element I) in the GA3OX1 promoter. Binding to GNFEI sequence is required for GA-negative feedback regulation of GA3OX1. The sequence is that of AT-hook motif nuclear-localized protein 25 from Arabidopsis thaliana (Mouse-ear cress).